A 163-amino-acid polypeptide reads, in one-letter code: SsrA-binding protein (163 aa).

Belongs to the SmpB family.

Its subcellular location is the cytoplasm. In terms of biological role, required for rescue of stalled ribosomes mediated by trans-translation. Binds to transfer-messenger RNA (tmRNA), required for stable association of tmRNA with ribosomes. tmRNA and SmpB together mimic tRNA shape, replacing the anticodon stem-loop with SmpB. tmRNA is encoded by the ssrA gene; the 2 termini fold to resemble tRNA(Ala) and it encodes a 'tag peptide', a short internal open reading frame. During trans-translation Ala-aminoacylated tmRNA acts like a tRNA, entering the A-site of stalled ribosomes, displacing the stalled mRNA. The ribosome then switches to translate the ORF on the tmRNA; the nascent peptide is terminated with the 'tag peptide' encoded by the tmRNA and targeted for degradation. The ribosome is freed to recommence translation, which seems to be the essential function of trans-translation. The chain is SsrA-binding protein from Corynebacterium diphtheriae (strain ATCC 700971 / NCTC 13129 / Biotype gravis).